The primary structure comprises 241 residues: Probable transcriptional regulatory protein NE0210 (241 aa).

This sequence belongs to the TACO1 family.

It is found in the cytoplasm. In Nitrosomonas europaea (strain ATCC 19718 / CIP 103999 / KCTC 2705 / NBRC 14298), this protein is Probable transcriptional regulatory protein NE0210.